Consider the following 252-residue polypeptide: tRNA (guanine-N(1)-)-methyltransferase (252 aa).

S-adenosyl-L-methionine is bound by residues glycine 113 and 133 to 138 (IGDYVL).

The protein belongs to the RNA methyltransferase TrmD family. In terms of assembly, homodimer.

It is found in the cytoplasm. The catalysed reaction is guanosine(37) in tRNA + S-adenosyl-L-methionine = N(1)-methylguanosine(37) in tRNA + S-adenosyl-L-homocysteine + H(+). Specifically methylates guanosine-37 in various tRNAs. In Xanthomonas campestris pv. campestris (strain 8004), this protein is tRNA (guanine-N(1)-)-methyltransferase.